Reading from the N-terminus, the 501-residue chain is Pentatricopeptide repeat-containing protein At4g16470 (501 aa).

PPR repeat units lie at residues 107–141, 142–172, 173–207, 208–242, 243–273, 274–308, 309–344, and 345–379; these read EPET…GFAL, NEYL…LKIR, DLIP…RIVP, DQYT…CIKS, NIIV…LSTR, NVIT…GCRP, NPVT…GIEP, and EGQH…EHPP. The segment at 380–455 is type E motif; sequence VWGSLLGACR…DPGYSQIELQ (76 aa). A type E(+) motif region spans residues 456–486; sequence GEVHRFMKDDTSHRLSEKIYKKVHEMTSFFM.

This sequence belongs to the PPR family. PCMP-E subfamily.

The polypeptide is Pentatricopeptide repeat-containing protein At4g16470 (PCMP-E12) (Arabidopsis thaliana (Mouse-ear cress)).